A 427-amino-acid chain; its full sequence is Trigger factor (427 aa).

A PPIase FKBP-type domain is found at 163–248 (GDTVVIDFVG…IHEVKAKEVP (86 aa)).

This sequence belongs to the FKBP-type PPIase family. Tig subfamily.

The protein resides in the cytoplasm. It carries out the reaction [protein]-peptidylproline (omega=180) = [protein]-peptidylproline (omega=0). Involved in protein export. Acts as a chaperone by maintaining the newly synthesized protein in an open conformation. Functions as a peptidyl-prolyl cis-trans isomerase. The protein is Trigger factor of Streptococcus pneumoniae serotype 2 (strain D39 / NCTC 7466).